The primary structure comprises 81 residues: Photosystem I iron-sulfur center (81 aa).

2 4Fe-4S ferredoxin-type domains span residues 2-31 (SHKI…MIPW) and 39-68 (IASA…VRVY). Positions 11, 14, 17, 21, 48, 51, 54, and 58 each coordinate [4Fe-4S] cluster.

As to quaternary structure, the eukaryotic PSI reaction center is composed of at least 11 subunits. [4Fe-4S] cluster serves as cofactor.

The protein localises to the plastid. It is found in the chloroplast thylakoid membrane. The enzyme catalyses reduced [plastocyanin] + hnu + oxidized [2Fe-2S]-[ferredoxin] = oxidized [plastocyanin] + reduced [2Fe-2S]-[ferredoxin]. Apoprotein for the two 4Fe-4S centers FA and FB of photosystem I (PSI); essential for photochemical activity. FB is the terminal electron acceptor of PSI, donating electrons to ferredoxin. The C-terminus interacts with PsaA/B/D and helps assemble the protein into the PSI complex. Required for binding of PsaD and PsaE to PSI. PSI is a plastocyanin-ferredoxin oxidoreductase, converting photonic excitation into a charge separation, which transfers an electron from the donor P700 chlorophyll pair to the spectroscopically characterized acceptors A0, A1, FX, FA and FB in turn. This chain is Photosystem I iron-sulfur center, found in Chara vulgaris (Common stonewort).